The sequence spans 498 residues: Type II secretion system protein E (498 aa).

Cys394, Cys397, Cys425, and Cys428 together coordinate Zn(2+).

Belongs to the GSP E family. Forms homooligomers; most probably hexamers. Interacts with OutL/GspL. Zn(2+) is required as a cofactor.

The protein resides in the cell inner membrane. The enzyme catalyses ATP + H2O + cellular proteinSide 1 = ADP + phosphate + cellular proteinSide 2.. In terms of biological role, ATPase component of the type II secretion system required for the energy-dependent secretion of extracellular factors such as proteases and toxins from the periplasm. Acts as a molecular motor to provide the energy that is required for assembly of the pseudopilus and the extrusion of substrates generated in the cytoplasm. The protein is Type II secretion system protein E (outE) of Dickeya dadantii (strain 3937) (Erwinia chrysanthemi (strain 3937)).